The primary structure comprises 61 residues: Small ribosomal subunit protein uS14 (61 aa).

Zn(2+) contacts are provided by C24, C27, C40, and C43.

This sequence belongs to the universal ribosomal protein uS14 family. Zinc-binding uS14 subfamily. Part of the 30S ribosomal subunit. Contacts proteins S3 and S10. The cofactor is Zn(2+).

Binds 16S rRNA, required for the assembly of 30S particles and may also be responsible for determining the conformation of the 16S rRNA at the A site. This Desulfatibacillum aliphaticivorans protein is Small ribosomal subunit protein uS14.